A 372-amino-acid chain; its full sequence is Chaperone protein DnaJ (372 aa).

One can recognise a J domain in the interval 5–70; sequence DFYEVLGVTK…QKRAAYDRYG (66 aa). A CR-type zinc finger spans residues 129 to 207; that stretch reads GKLASLTLPT…CGGAGRVTRE (79 aa). Residues Cys142, Cys145, Cys159, Cys162, Cys181, Cys184, Cys195, and Cys198 each contribute to the Zn(2+) site. CXXCXGXG motif repeat units lie at residues 142–149, 159–166, 181–188, and 195–202; these read CEACDGTG, CPTCGGQG, CPQCHGRG, and CQACGGAG.

It belongs to the DnaJ family. In terms of assembly, homodimer. It depends on Zn(2+) as a cofactor.

It localises to the cytoplasm. Participates actively in the response to hyperosmotic and heat shock by preventing the aggregation of stress-denatured proteins and by disaggregating proteins, also in an autonomous, DnaK-independent fashion. Unfolded proteins bind initially to DnaJ; upon interaction with the DnaJ-bound protein, DnaK hydrolyzes its bound ATP, resulting in the formation of a stable complex. GrpE releases ADP from DnaK; ATP binding to DnaK triggers the release of the substrate protein, thus completing the reaction cycle. Several rounds of ATP-dependent interactions between DnaJ, DnaK and GrpE are required for fully efficient folding. Also involved, together with DnaK and GrpE, in the DNA replication of plasmids through activation of initiation proteins. The protein is Chaperone protein DnaJ of Beijerinckia indica subsp. indica (strain ATCC 9039 / DSM 1715 / NCIMB 8712).